Reading from the N-terminus, the 185-residue chain is Prorelaxin H1 (185 aa).

Residues 1–22 (MPRLFLFHLLEFCLLLNQFSRA) form the signal peptide. 3 disulfide bridges follow: C35-C172, C47-C185, and C171-C176. A propeptide spans 56–158 (SLSQEDAPQT…KYLGLDTHSQ (103 aa)) (connecting peptide).

This sequence belongs to the insulin family. As to quaternary structure, heterodimer of a B chain and an A chain linked by two disulfide bonds. In terms of tissue distribution, prostate. Not expressed in placenta, decidua or ovary.

It is found in the secreted. In terms of biological role, relaxin is an ovarian hormone that acts with estrogen to produce dilatation of the birth canal in many mammals. May be involved in remodeling of connective tissues during pregnancy, promoting growth of pubic ligaments and ripening of the cervix. This chain is Prorelaxin H1 (RLN1), found in Homo sapiens (Human).